A 185-amino-acid chain; its full sequence is Crossover junction endodeoxyribonuclease RuvC (185 aa).

Active-site residues include aspartate 7, glutamate 68, and aspartate 141. Mg(2+) contacts are provided by aspartate 7, glutamate 68, and aspartate 141.

This sequence belongs to the RuvC family. As to quaternary structure, homodimer which binds Holliday junction (HJ) DNA. The HJ becomes 2-fold symmetrical on binding to RuvC with unstacked arms; it has a different conformation from HJ DNA in complex with RuvA. In the full resolvosome a probable DNA-RuvA(4)-RuvB(12)-RuvC(2) complex forms which resolves the HJ. Mg(2+) serves as cofactor.

The protein localises to the cytoplasm. The enzyme catalyses Endonucleolytic cleavage at a junction such as a reciprocal single-stranded crossover between two homologous DNA duplexes (Holliday junction).. The RuvA-RuvB-RuvC complex processes Holliday junction (HJ) DNA during genetic recombination and DNA repair. Endonuclease that resolves HJ intermediates. Cleaves cruciform DNA by making single-stranded nicks across the HJ at symmetrical positions within the homologous arms, yielding a 5'-phosphate and a 3'-hydroxyl group; requires a central core of homology in the junction. The consensus cleavage sequence is 5'-(A/T)TT(C/G)-3'. Cleavage occurs on the 3'-side of the TT dinucleotide at the point of strand exchange. HJ branch migration catalyzed by RuvA-RuvB allows RuvC to scan DNA until it finds its consensus sequence, where it cleaves and resolves the cruciform DNA. This chain is Crossover junction endodeoxyribonuclease RuvC, found in Helicobacter hepaticus (strain ATCC 51449 / 3B1).